A 195-amino-acid chain; its full sequence is Early E3 22.2 kDa glycoprotein (195 aa).

N-linked (GlcNAc...) asparagine; by host glycans are attached at residues Asn-20, Asn-61, Asn-76, Asn-88, Asn-126, and Asn-139.

The protein is Early E3 22.2 kDa glycoprotein of Canine adenovirus serotype 1 (strain Glaxo) (CAdV-1).